The primary structure comprises 339 residues: N-acetyl-gamma-glutamyl-phosphate reductase (339 aa).

Cys145 is a catalytic residue.

It belongs to the NAGSA dehydrogenase family. Type 1 subfamily.

It localises to the cytoplasm. The enzyme catalyses N-acetyl-L-glutamate 5-semialdehyde + phosphate + NADP(+) = N-acetyl-L-glutamyl 5-phosphate + NADPH + H(+). It participates in amino-acid biosynthesis; L-arginine biosynthesis; N(2)-acetyl-L-ornithine from L-glutamate: step 3/4. Functionally, catalyzes the NADPH-dependent reduction of N-acetyl-5-glutamyl phosphate to yield N-acetyl-L-glutamate 5-semialdehyde. The polypeptide is N-acetyl-gamma-glutamyl-phosphate reductase (Kosmotoga olearia (strain ATCC BAA-1733 / DSM 21960 / TBF 19.5.1)).